The chain runs to 192 residues: Imidazoleglycerol-phosphate dehydratase (192 aa).

This sequence belongs to the imidazoleglycerol-phosphate dehydratase family.

Its subcellular location is the cytoplasm. It catalyses the reaction D-erythro-1-(imidazol-4-yl)glycerol 3-phosphate = 3-(imidazol-4-yl)-2-oxopropyl phosphate + H2O. Its pathway is amino-acid biosynthesis; L-histidine biosynthesis; L-histidine from 5-phospho-alpha-D-ribose 1-diphosphate: step 6/9. This is Imidazoleglycerol-phosphate dehydratase from Staphylococcus aureus (strain MRSA252).